The sequence spans 818 residues: Phosphoenolpyruvate synthase (818 aa).

His442 serves as the catalytic Tele-phosphohistidine intermediate. Residues Arg532, Arg601, Glu703, Gly724, Ser725, Asn726, and Asp727 each contribute to the substrate site. Glu703 lines the Mg(2+) pocket. A Mg(2+)-binding site is contributed by Asp727. Cys774 (proton donor) is an active-site residue.

Belongs to the PEP-utilizing enzyme family. The cofactor is Mg(2+).

It catalyses the reaction pyruvate + ATP + H2O = phosphoenolpyruvate + AMP + phosphate + 2 H(+). It participates in carbohydrate biosynthesis; gluconeogenesis. Functionally, catalyzes the phosphorylation of pyruvate to phosphoenolpyruvate. In Synechocystis sp. (strain ATCC 27184 / PCC 6803 / Kazusa), this protein is Phosphoenolpyruvate synthase (ppsA).